The following is a 411-amino-acid chain: Multidrug resistance protein MdtG (411 aa).

11 helical membrane passes run 17–37 (LFVAWCGCFLTGIAFSLVMPF), 59–79 (LVFSITFLFSAIASPFWGGLA), 92–112 (ALGMSVVMVLMGLATSIWQFL), 116–136 (AVLGLLGGFVPNANALIATQV), 147–167 (WLSTGAVSGALIGPLIGGLLA), 174–194 (PVFFITASVLFVCFIMTLFAV), 222–242 (VLTLFVTTMIIQVATGSIAPI), 257–277 (LAFVSGLIASVPGVAALISAP), 291–311 (ILVAMLLVSVLLLIPMSMVQN), 320–340 (FLLGAADGALLPAVQTLLIYN), and 379–399 (AVFVVTACVVLFNAIYSWITL).

Belongs to the major facilitator superfamily. DHA1 family. MdtG (TC 2.A.1.2.20) subfamily.

It is found in the cell inner membrane. The sequence is that of Multidrug resistance protein MdtG from Erwinia billingiae (strain Eb661).